The chain runs to 235 residues: Cytidylate kinase (235 aa).

ATP is bound at residue Gly-16–Thr-24.

This sequence belongs to the cytidylate kinase family. Type 1 subfamily.

It localises to the cytoplasm. It catalyses the reaction CMP + ATP = CDP + ADP. The enzyme catalyses dCMP + ATP = dCDP + ADP. This chain is Cytidylate kinase, found in Chloroherpeton thalassium (strain ATCC 35110 / GB-78).